A 367-amino-acid polypeptide reads, in one-letter code: Epoxide hydrolase 3 (367 aa).

The helical transmembrane segment at 22 to 42 (ALVMSLVYLAALVAAFVYSCI) threads the bilayer. Asp-180 (nucleophile) is an active-site residue. The active-site Proton donor is the Tyr-288. The active-site Proton acceptor is the His-344.

This sequence belongs to the AB hydrolase superfamily. Epoxide hydrolase family. Predominantly expressed in skin, esophagus, lung and tongue and to a lesser extent in pancreas and eye.

Its subcellular location is the microsome membrane. The enzyme catalyses an epoxide + H2O = an ethanediol. It catalyses the reaction 9,10-epoxyoctadecanoate + H2O = 9,10-dihydroxyoctadecanoate. It carries out the reaction 9,10-epoxy-(12Z)-octadecenoate + H2O = 9,10-dihydroxy-(12Z)-octadecenoate. The catalysed reaction is 8,9-epoxy-(5Z,11Z,14Z)-eicosatrienoate + H2O = 8,9-dihydroxy-(5Z,11Z,14Z)-eicosatrienoate. The enzyme catalyses 11,12-epoxy-(5Z,8Z,14Z)-eicosatrienoate + H2O = 11,12-dihydroxy-(5Z,8Z,14Z)-eicosatrienoate. It catalyses the reaction 14,15-epoxy-(5Z,8Z,11Z)-eicosatrienoate + H2O = 14,15-dihydroxy-(5Z,8Z,11Z)-eicosatrienoate. With respect to regulation, inhibited by 1-(1-acetylpiperidin-4-yl)-3-(4-(trifl uoromethoxy)phenyl)urea (TPAU), 1-cyclohexyl-3-dodecylurea (CDU), 12-(3-adamantan-1-yl-ureido)-dodecanoic acid (AUDA), 1-((3S, 5S, 7S)-adamantan-1-yl)-3-(5-(2-(2-ethoxyethoxy) ethoxy)pentyl)urea (AEPU) and to a lesser extent by 8-(3-((3S, 5S, 7S)-adamantan-1-yl)ureido) octanoic acid (AUOA). Functionally, catalyzes the hydrolysis of epoxide-containing fatty acids. Active in vitro against epoxyeicosatrienoic acids (EETs) including 8,9-EET, 9,10-EET, 11,12-EET and 14,15-EET and leukotoxin. This chain is Epoxide hydrolase 3 (Ephx3), found in Mus musculus (Mouse).